A 206-amino-acid polypeptide reads, in one-letter code: GTP-binding protein Rho3 (206 aa).

24–31 contacts GTP; sequence GDGACGKT. Residues 46-54 carry the Effector region motif; it reads YEPTVFENY. GTP contacts are provided by residues 71-75 and 129-132; these read DTAGQ and SKCD. The residue at position 203 (C203) is a Cysteine methyl ester. Residue C203 is the site of S-geranylgeranyl cysteine attachment. Positions 204-206 are cleaved as a propeptide — removed in mature form; the sequence is CVM.

Belongs to the small GTPase superfamily. Rho family.

It localises to the cell membrane. The chain is GTP-binding protein Rho3 (RHO3) from Schizophyllum commune (Split gill fungus).